Here is a 305-residue protein sequence, read N- to C-terminus: Ribonuclease BN (305 aa).

The Zn(2+) site is built by H64, H66, D68, H69, H141, D212, and H270. D68 acts as the Proton acceptor in catalysis.

It belongs to the RNase Z family. RNase BN subfamily. As to quaternary structure, homodimer. Zn(2+) is required as a cofactor.

Functionally, zinc phosphodiesterase, which has both exoribonuclease and endoribonuclease activities. In Escherichia coli O7:K1 (strain IAI39 / ExPEC), this protein is Ribonuclease BN.